The following is a 381-amino-acid chain: tRNA N6-adenosine threonylcarbamoyltransferase (381 aa).

Fe cation-binding residues include H114 and H118. Substrate contacts are provided by residues 142-146, D178, G191, D195, and N321; that span reads VVSGG. Position 349 (D349) interacts with Fe cation.

Belongs to the KAE1 / TsaD family. It depends on Fe(2+) as a cofactor.

The protein resides in the cytoplasm. It catalyses the reaction L-threonylcarbamoyladenylate + adenosine(37) in tRNA = N(6)-L-threonylcarbamoyladenosine(37) in tRNA + AMP + H(+). Required for the formation of a threonylcarbamoyl group on adenosine at position 37 (t(6)A37) in tRNAs that read codons beginning with adenine. Is involved in the transfer of the threonylcarbamoyl moiety of threonylcarbamoyl-AMP (TC-AMP) to the N6 group of A37, together with TsaE and TsaB. TsaD likely plays a direct catalytic role in this reaction. This chain is tRNA N6-adenosine threonylcarbamoyltransferase, found in Koribacter versatilis (strain Ellin345).